A 98-amino-acid polypeptide reads, in one-letter code: NADH-ubiquinone oxidoreductase chain 4L (98 aa).

A run of 3 helical transmembrane segments spans residues 1–21, 29–49, and 61–81; these read MSLTYMNMLMAFTTSLLGLLM, SLLCLEGMMLSLFVMVTITIL, and IILLVFAACEAALGLSLLVMV.

This sequence belongs to the complex I subunit 4L family. In terms of assembly, core subunit of respiratory chain NADH dehydrogenase (Complex I) which is composed of 45 different subunits.

The protein resides in the mitochondrion inner membrane. It carries out the reaction a ubiquinone + NADH + 5 H(+)(in) = a ubiquinol + NAD(+) + 4 H(+)(out). Core subunit of the mitochondrial membrane respiratory chain NADH dehydrogenase (Complex I) which catalyzes electron transfer from NADH through the respiratory chain, using ubiquinone as an electron acceptor. Part of the enzyme membrane arm which is embedded in the lipid bilayer and involved in proton translocation. The sequence is that of NADH-ubiquinone oxidoreductase chain 4L (MT-ND4L) from Ectophylla alba (White bat).